Reading from the N-terminus, the 99-residue chain is Aspartyl/glutamyl-tRNA(Asn/Gln) amidotransferase subunit C (99 aa).

It belongs to the GatC family. Heterotrimer of A, B and C subunits.

The catalysed reaction is L-glutamyl-tRNA(Gln) + L-glutamine + ATP + H2O = L-glutaminyl-tRNA(Gln) + L-glutamate + ADP + phosphate + H(+). The enzyme catalyses L-aspartyl-tRNA(Asn) + L-glutamine + ATP + H2O = L-asparaginyl-tRNA(Asn) + L-glutamate + ADP + phosphate + 2 H(+). Allows the formation of correctly charged Asn-tRNA(Asn) or Gln-tRNA(Gln) through the transamidation of misacylated Asp-tRNA(Asn) or Glu-tRNA(Gln) in organisms which lack either or both of asparaginyl-tRNA or glutaminyl-tRNA synthetases. The reaction takes place in the presence of glutamine and ATP through an activated phospho-Asp-tRNA(Asn) or phospho-Glu-tRNA(Gln). The sequence is that of Aspartyl/glutamyl-tRNA(Asn/Gln) amidotransferase subunit C from Rhodococcus opacus (strain B4).